The sequence spans 705 residues: Polyphosphate kinase (705 aa).

N58 serves as a coordination point for ATP. Residues R389 and R419 each coordinate Mg(2+). H449 (phosphohistidine intermediate) is an active-site residue. 3 residues coordinate ATP: Y482, R578, and H606.

The protein belongs to the polyphosphate kinase 1 (PPK1) family. The cofactor is Mg(2+). An intermediate of this reaction is the autophosphorylated ppk in which a phosphate is covalently linked to a histidine residue through a N-P bond.

The catalysed reaction is [phosphate](n) + ATP = [phosphate](n+1) + ADP. Catalyzes the reversible transfer of the terminal phosphate of ATP to form a long-chain polyphosphate (polyP). In Halalkalibacterium halodurans (strain ATCC BAA-125 / DSM 18197 / FERM 7344 / JCM 9153 / C-125) (Bacillus halodurans), this protein is Polyphosphate kinase.